We begin with the raw amino-acid sequence, 236 residues long: MNSTPDTSSRPSIRALTLLEGRVLGVLVEKQHTVPDSYPLSLNALTLGCNQKTGRAPVMNATEAEVLTAVDGLKRLSLVMEGSSSRVPRFEHNMNRVLGLPSQSAALLTTLLLRGPQTAAELRLNSARLHGFADISSVEAFLDELAANDPPRVVKLARTPGERENRWTHLLCGEVSASELAQPGAEDDAVPLSAFEAVKAEQKRLADEVSRLQTVVRRMAAELGIDAGDLTAGEGA.

It belongs to the UPF0502 family.

This chain is UPF0502 protein Bxeno_B1639, found in Paraburkholderia xenovorans (strain LB400).